Reading from the N-terminus, the 661-residue chain is Fructose-1,6-bisphosphatase class 3 (661 aa).

This sequence belongs to the FBPase class 3 family. It depends on Mn(2+) as a cofactor.

The enzyme catalyses beta-D-fructose 1,6-bisphosphate + H2O = beta-D-fructose 6-phosphate + phosphate. The protein operates within carbohydrate biosynthesis; gluconeogenesis. The protein is Fructose-1,6-bisphosphatase class 3 of Clostridioides difficile (strain 630) (Peptoclostridium difficile).